The chain runs to 413 residues: Serine hydroxymethyltransferase (413 aa).

(6S)-5,6,7,8-tetrahydrofolate is bound by residues L120 and 124–126 (GHL). K229 is modified (N6-(pyridoxal phosphate)lysine). A (6S)-5,6,7,8-tetrahydrofolate-binding site is contributed by 352–354 (SPF).

This sequence belongs to the SHMT family. In terms of assembly, homodimer. The cofactor is pyridoxal 5'-phosphate.

The protein resides in the cytoplasm. The enzyme catalyses (6R)-5,10-methylene-5,6,7,8-tetrahydrofolate + glycine + H2O = (6S)-5,6,7,8-tetrahydrofolate + L-serine. It functions in the pathway one-carbon metabolism; tetrahydrofolate interconversion. It participates in amino-acid biosynthesis; glycine biosynthesis; glycine from L-serine: step 1/1. In terms of biological role, catalyzes the reversible interconversion of serine and glycine with tetrahydrofolate (THF) serving as the one-carbon carrier. This reaction serves as the major source of one-carbon groups required for the biosynthesis of purines, thymidylate, methionine, and other important biomolecules. Also exhibits THF-independent aldolase activity toward beta-hydroxyamino acids, producing glycine and aldehydes, via a retro-aldol mechanism. This is Serine hydroxymethyltransferase from Heliobacterium modesticaldum (strain ATCC 51547 / Ice1).